Consider the following 452-residue polypeptide: Nuclear distribution protein PAC1 (452 aa).

One can recognise a LisH domain in the interval 12–44 (QKDELHKAILAYFSASGLSNTGAALREELGVGD). The stretch at 64–91 (TGVLRLQKKIMELESRLSSLQSELDSAT) forms a coiled coil. WD repeat units lie at residues 117–158 (SHRN…RTVK), 160–200 (HTKA…KNIR), 204–245 (GHDH…CVKT), 248–287 (GHSDWIRDVEPSHDGRWLLSAGGDQTTRLWDASTAEHKAT), 290–350 (GHEH…LKTL), 352–391 (GHDNWIRALAFHPAGKYLLSVSDDKTIRCWDLTQDGRCVK), 396–435 (AHSHFATCLRWAPAPAKEQTNGEAKTNGIPKAGEKVINVR), and 437–452 (VIATGSADMNVRVFAS).

Belongs to the WD repeat LIS1/nudF family. Self-associates. Interacts with NDL1 and dynein.

Its subcellular location is the cytoplasm. The protein resides in the cytoskeleton. It is found in the spindle pole. In terms of biological role, positively regulates the activity of the minus-end directed microtubule motor protein dynein. May enhance dynein-mediated microtubule sliding by targeting dynein to the microtubule plus end. Required for nuclear migration during vegetative growth as well as development. Required for retrograde early endosome (EE) transport from the hyphal tip. Required for localization of dynein to the mitotic spindle poles. Recruits additional proteins to the dynein complex at SPBs. In Tuber melanosporum (strain Mel28) (Perigord black truffle), this protein is Nuclear distribution protein PAC1.